A 225-amino-acid chain; its full sequence is UPF0758 protein NGK_1225 (225 aa).

The 123-residue stretch at 102–224 folds into the MPN domain; the sequence is TLSDPDTVAD…VRSFRQLGLM (123 aa). 3 residues coordinate Zn(2+): histidine 173, histidine 175, and aspartate 186. The JAMM motif motif lies at 173 to 186; sequence HNHPGGSPEPSQED.

Belongs to the UPF0758 family.

This is UPF0758 protein NGK_1225 from Neisseria gonorrhoeae (strain NCCP11945).